A 480-amino-acid polypeptide reads, in one-letter code: Cytochrome b-c1 complex subunit 1, mitochondrial (480 aa).

Residues 1-34 (MAASVVCRAATAGAQVLLRARRSPALLRTPALRS) constitute a mitochondrion transit peptide. N6-acetyllysine occurs at positions 111 and 138. At Lys-163 the chain carries N6-acetyllysine; alternate. Lys-163 carries the post-translational modification N6-succinyllysine; alternate. Ser-212 carries the phosphoserine modification. Lys-248 carries the post-translational modification N6-acetyllysine.

This sequence belongs to the peptidase M16 family. UQCRC1/QCR1 subfamily. In terms of assembly, component of the ubiquinol-cytochrome c oxidoreductase (cytochrome b-c1 complex, complex III, CIII), a multisubunit enzyme composed of 11 subunits. The complex is composed of 3 respiratory subunits cytochrome b, cytochrome c1 and Rieske protein UQCRFS1, 2 core protein subunits UQCRC1/QCR1 and UQCRC2/QCR2, and 6 low-molecular weight protein subunits UQCRH/QCR6, UQCRB/QCR7, UQCRQ/QCR8, UQCR10/QCR9, UQCR11/QCR10 and subunit 9, the cleavage product of Rieske protein UQCRFS1. The complex exists as an obligatory dimer and forms supercomplexes (SCs) in the inner mitochondrial membrane with NADH-ubiquinone oxidoreductase (complex I, CI) and cytochrome c oxidase (complex IV, CIV), resulting in different assemblies (supercomplex SCI(1)III(2)IV(1) and megacomplex MCI(2)III(2)IV(2)). Interacts with UQCC6. Interacts with STMP1. As to expression, expressed in brain, including substantia nigra, striatum, cortex and cerebellum, and in spinal cord, heart, kidney, liver and muscle.

It is found in the mitochondrion inner membrane. Functionally, component of the ubiquinol-cytochrome c oxidoreductase, a multisubunit transmembrane complex that is part of the mitochondrial electron transport chain which drives oxidative phosphorylation. The respiratory chain contains 3 multisubunit complexes succinate dehydrogenase (complex II, CII), ubiquinol-cytochrome c oxidoreductase (cytochrome b-c1 complex, complex III, CIII) and cytochrome c oxidase (complex IV, CIV), that cooperate to transfer electrons derived from NADH and succinate to molecular oxygen, creating an electrochemical gradient over the inner membrane that drives transmembrane transport and the ATP synthase. The cytochrome b-c1 complex catalyzes electron transfer from ubiquinol to cytochrome c, linking this redox reaction to translocation of protons across the mitochondrial inner membrane, with protons being carried across the membrane as hydrogens on the quinol. In the process called Q cycle, 2 protons are consumed from the matrix, 4 protons are released into the intermembrane space and 2 electrons are passed to cytochrome c. The 2 core subunits UQCRC1/QCR1 and UQCRC2/QCR2 are homologous to the 2 mitochondrial-processing peptidase (MPP) subunits beta-MPP and alpha-MPP respectively, and they seem to have preserved their MPP processing properties. May be involved in the in situ processing of UQCRFS1 into the mature Rieske protein and its mitochondrial targeting sequence (MTS)/subunit 9 when incorporated into complex III. Seems to play an important role in the maintenance of proper mitochondrial function in nigral dopaminergic neurons. The polypeptide is Cytochrome b-c1 complex subunit 1, mitochondrial (UQCRC1) (Homo sapiens (Human)).